The chain runs to 307 residues: Porphobilinogen deaminase (307 aa).

C241 is subject to S-(dipyrrolylmethanemethyl)cysteine.

The protein belongs to the HMBS family. As to quaternary structure, monomer. The cofactor is dipyrromethane.

The catalysed reaction is 4 porphobilinogen + H2O = hydroxymethylbilane + 4 NH4(+). Its pathway is porphyrin-containing compound metabolism; protoporphyrin-IX biosynthesis; coproporphyrinogen-III from 5-aminolevulinate: step 2/4. Functionally, tetrapolymerization of the monopyrrole PBG into the hydroxymethylbilane pre-uroporphyrinogen in several discrete steps. This Macrococcus caseolyticus (strain JCSC5402) (Macrococcoides caseolyticum) protein is Porphobilinogen deaminase.